A 204-amino-acid chain; its full sequence is Large ribosomal subunit protein uL4 (204 aa).

The interval 49-75 (TKGRSDVSGGGKKPWRQKGRGGARAGS) is disordered.

Belongs to the universal ribosomal protein uL4 family. In terms of assembly, part of the 50S ribosomal subunit.

One of the primary rRNA binding proteins, this protein initially binds near the 5'-end of the 23S rRNA. It is important during the early stages of 50S assembly. It makes multiple contacts with different domains of the 23S rRNA in the assembled 50S subunit and ribosome. Functionally, forms part of the polypeptide exit tunnel. The chain is Large ribosomal subunit protein uL4 from Campylobacter jejuni subsp. jejuni serotype O:23/36 (strain 81-176).